The chain runs to 403 residues: Prostaglandin E2 receptor EP1 subtype (403 aa).

Residues 1-38 (MSLCGPLNLSLAGEATPCAEPGAPNASAWPPSGRASAS) are Extracellular-facing. Asn8 and Asn25 each carry an N-linked (GlcNAc...) asparagine glycan. The helical transmembrane segment at 39–65 (PALPIFSMTLGAVSNVLALALLAQAAG) threads the bilayer. The Cytoplasmic portion of the chain corresponds to 66–75 (RLRRRRSAAT). The helical transmembrane segment at 76-99 (FLLFVASLLATDLAGHVIPGALVL) threads the bilayer. Over 100-114 (RLYAAGRSPAGGACH) the chain is Extracellular. Cys113 and Cys191 form a disulfide bridge. Residues 115 to 136 (FLGGCMVFFGLCPLLLGCGMAV) traverse the membrane as a helical segment. Residues 137 to 158 (ERCVGVTRPLLHAARVSAARAR) are Cytoplasmic-facing. Residues 159–180 (LALAVLAALALAVALLPLARVG) form a helical membrane-spanning segment. The Extracellular portion of the chain corresponds to 181–204 (RYELQYPGTWCFIGLRPAGGWRQA). Residues 205–230 (LLAGLFAGLGLAALLAALVCNTLSGL) traverse the membrane as a helical segment. At 231-295 (ALLRARWRRR…ARRARAHDVE (65 aa)) the chain is on the cytoplasmic side. Residues 243-287 (RRRPQACGPDGRRHWGARAPRSASASSSSSVASVPGGSPGRGSAR) form a disordered region. A compositionally biased stretch (low complexity) spans 259-278 (ARAPRSASASSSSSVASVPG). Residues 296-322 (MVGQLVGIMVVSCICWSPLLVLVVLAV) form a helical membrane-spanning segment. At 323-333 (GGWGSSSLQRP) the chain is on the extracellular side. Residues 334–355 (LFLAVRLASWNQILDPWVYILL) form a helical membrane-spanning segment. Topologically, residues 356–403 (RQAVLRQLLRLLPPRPGAKGSPAGLALTRSAWEASSLRSSRHSSLSHL) are cytoplasmic.

Belongs to the G-protein coupled receptor 1 family.

The protein resides in the cell membrane. Functionally, receptor for prostaglandin E2 (PGE2). The activity of this receptor is mediated by G(q) proteins which activate a phosphatidylinositol-calcium second messenger system. May play a role as an important modulator of renal function. Implicated the smooth muscle contractile response to PGE2 in various tissues. The protein is Prostaglandin E2 receptor EP1 subtype (PTGER1) of Canis lupus familiaris (Dog).